Reading from the N-terminus, the 607-residue chain is Elongation factor 4 (607 aa).

The tr-type G domain maps to 11–193 (SKIRNFSIIA…QIVEKVPAPT (183 aa)). GTP-binding positions include 23 to 28 (DHGKST) and 140 to 143 (NKID).

Belongs to the TRAFAC class translation factor GTPase superfamily. Classic translation factor GTPase family. LepA subfamily.

The protein localises to the cell membrane. It catalyses the reaction GTP + H2O = GDP + phosphate + H(+). Its function is as follows. Required for accurate and efficient protein synthesis under certain stress conditions. May act as a fidelity factor of the translation reaction, by catalyzing a one-codon backward translocation of tRNAs on improperly translocated ribosomes. Back-translocation proceeds from a post-translocation (POST) complex to a pre-translocation (PRE) complex, thus giving elongation factor G a second chance to translocate the tRNAs correctly. Binds to ribosomes in a GTP-dependent manner. This is Elongation factor 4 from Bacillus cereus (strain AH820).